Reading from the N-terminus, the 701-residue chain is Glycine--tRNA ligase beta subunit (701 aa).

It belongs to the class-II aminoacyl-tRNA synthetase family. As to quaternary structure, tetramer of two alpha and two beta subunits.

It is found in the cytoplasm. It carries out the reaction tRNA(Gly) + glycine + ATP = glycyl-tRNA(Gly) + AMP + diphosphate. This Nitratidesulfovibrio vulgaris (strain DSM 19637 / Miyazaki F) (Desulfovibrio vulgaris) protein is Glycine--tRNA ligase beta subunit.